A 253-amino-acid polypeptide reads, in one-letter code: Proteasome subunit alpha type-7 (253 aa).

Belongs to the peptidase T1A family. In terms of assembly, the 26S proteasome consists of a 20S proteasome core and two 19S regulatory subunits. The 20S proteasome core is composed of 28 subunits that are arranged in four stacked rings, resulting in a barrel-shaped structure. The two end rings are each formed by seven alpha subunits, and the two central rings are each formed by seven beta subunits. The catalytic chamber with the active sites is on the inside of the barrel.

Its subcellular location is the cytoplasm. The protein resides in the nucleus. In terms of biological role, the proteasome is a multicatalytic proteinase complex which is characterized by its ability to cleave peptides with Arg, Phe, Tyr, Leu, and Glu adjacent to the leaving group at neutral or slightly basic pH. The proteasome has an ATP-dependent proteolytic activity. The sequence is that of Proteasome subunit alpha type-7 (pas-4) from Caenorhabditis elegans.